Here is an 897-residue protein sequence, read N- to C-terminus: Macoilin (897 aa).

4 helical membrane passes run 113–133, 157–177, 181–201, and 204–224; these read ICYL…YVWI, QSWP…FLRI, PILI…PVWP, and LNAF…TVSM. Polar residues-rich tracts occupy residues 291–304 and 329–338; these read IQAA…SSKK and GNSGFNSTPP. A disordered region spans residues 291–375; sequence IQAASATPPT…DTSSSTIEDQ (85 aa). Residues 351–361 are compositionally biased toward acidic residues; the sequence is DMDDGDDSDDD. A helical membrane pass occupies residues 379–399; the sequence is GGISIIRFIFSSAAWLFSFVF. A compositionally biased stretch (polar residues) spans 403-413; the sequence is TPSENSLSNQQ. Disordered stretches follow at residues 403 to 535 and 724 to 770; these read TPSE…QEED and NGSS…SPVP. Over residues 414-424 the composition is skewed to acidic residues; sequence IDDDEDYEDGD. The segment covering 432–451 has biased composition (polar residues); that stretch reads TDSMTSTTKGRANTMPSTTR. Low complexity-rich tracts occupy residues 452-467 and 475-490; these read SQNN…QSNG and SHQN…SNGH. Residues 503-726 are a coiled coil; it reads DTNASNETDI…VQEFQIKNGS (224 aa). A compositionally biased stretch (basic and acidic residues) spans 510 to 535; that stretch reads TDIRSMSRELESLRSEISSRRSQEED. The span at 734-761 shows a compositional bias: polar residues; sequence ETLMNGRSSTEANNENDTTASDQSSPHQ.

Strong expression in many neurons, very weak expression is also detected in others tissues.

It localises to the rough endoplasmic reticulum membrane. The protein localises to the nucleus membrane. Its function is as follows. Plays a role in the regulation of neuronal activity. In AWA and AWC neurons, plays a role in regulating olfactory adaptation by controlling the forgetting sensory responses to odorants such as diacetyl and isoamyl alcohol. May play a role in regulating daf-7 expression in ASI neurons in response to bacterial small RNAs. In ASI neurons, promotes dauer formation in response to pheromones such as the ascarosides ascr#2 and ascr#3. The polypeptide is Macoilin (Caenorhabditis elegans).